A 146-amino-acid polypeptide reads, in one-letter code: 3-dehydroquinate dehydratase (146 aa).

The Proton acceptor role is filled by Tyr22. Residues Asn74, His80, and Asp87 each coordinate substrate. Residue His100 is the Proton donor of the active site. Residues 101–102 (LS) and Arg111 contribute to the substrate site.

The protein belongs to the type-II 3-dehydroquinase family. Homododecamer.

It catalyses the reaction 3-dehydroquinate = 3-dehydroshikimate + H2O. It functions in the pathway metabolic intermediate biosynthesis; chorismate biosynthesis; chorismate from D-erythrose 4-phosphate and phosphoenolpyruvate: step 3/7. In terms of biological role, catalyzes a trans-dehydration via an enolate intermediate. This chain is 3-dehydroquinate dehydratase, found in Clostridium perfringens (strain 13 / Type A).